The chain runs to 135 residues: Protein Wnt-7a (135 aa).

2 disulfides stabilise this stretch: C3–C17 and C5–C12. Residue S9 is the site of O-palmitoleoyl serine; by PORCN attachment. A disordered linker region spans residues 41–69 (VEPVRASRNKRPTFLKIKKPLSYRKPMDT). Cystine bridges form between C81/C112, C97/C107, C111/C134, and C130/C131. N98 is a glycosylation site (N-linked (GlcNAc...) asparagine).

The protein belongs to the Wnt family. Palmitoleoylation is required for efficient binding to frizzled receptors. Depalmitoleoylation leads to Wnt signaling pathway inhibition. As to expression, in embryo, in brain and ventral neural tube; in adults, in brain.

It is found in the secreted. It localises to the extracellular space. The protein localises to the extracellular matrix. In terms of biological role, ligand for members of the frizzled family of seven transmembrane receptors that functions in the canonical Wnt/beta-catenin signaling pathway. Plays an important role in embryonic development, including dorsal versus ventral patterning during limb development, skeleton development and urogenital tract development. Required for central nervous system (CNS) angiogenesis and blood-brain barrier regulation. This Xenopus laevis (African clawed frog) protein is Protein Wnt-7a (wnt7a).